Consider the following 471-residue polypeptide: ATP synthase subunit beta (471 aa).

154-161 (GGAGVGKT) serves as a coordination point for ATP.

It belongs to the ATPase alpha/beta chains family. F-type ATPases have 2 components, CF(1) - the catalytic core - and CF(0) - the membrane proton channel. CF(1) has five subunits: alpha(3), beta(3), gamma(1), delta(1), epsilon(1). CF(0) has three main subunits: a(1), b(2) and c(9-12). The alpha and beta chains form an alternating ring which encloses part of the gamma chain. CF(1) is attached to CF(0) by a central stalk formed by the gamma and epsilon chains, while a peripheral stalk is formed by the delta and b chains.

It localises to the cell membrane. The catalysed reaction is ATP + H2O + 4 H(+)(in) = ADP + phosphate + 5 H(+)(out). Functionally, produces ATP from ADP in the presence of a proton gradient across the membrane. The catalytic sites are hosted primarily by the beta subunits. In Mesomycoplasma hyopneumoniae (strain J / ATCC 25934 / NCTC 10110) (Mycoplasma hyopneumoniae), this protein is ATP synthase subunit beta.